A 375-amino-acid polypeptide reads, in one-letter code: UDP-N-acetylglucosamine--N-acetylmuramyl-(pentapeptide) pyrophosphoryl-undecaprenol N-acetylglucosamine transferase (375 aa).

UDP-N-acetyl-alpha-D-glucosamine is bound by residues 13–15 (TGG), Asn124, Arg165, Ser193, and Gln294.

This sequence belongs to the glycosyltransferase 28 family. MurG subfamily.

It localises to the cell inner membrane. The enzyme catalyses di-trans,octa-cis-undecaprenyl diphospho-N-acetyl-alpha-D-muramoyl-L-alanyl-D-glutamyl-meso-2,6-diaminopimeloyl-D-alanyl-D-alanine + UDP-N-acetyl-alpha-D-glucosamine = di-trans,octa-cis-undecaprenyl diphospho-[N-acetyl-alpha-D-glucosaminyl-(1-&gt;4)]-N-acetyl-alpha-D-muramoyl-L-alanyl-D-glutamyl-meso-2,6-diaminopimeloyl-D-alanyl-D-alanine + UDP + H(+). It functions in the pathway cell wall biogenesis; peptidoglycan biosynthesis. In terms of biological role, cell wall formation. Catalyzes the transfer of a GlcNAc subunit on undecaprenyl-pyrophosphoryl-MurNAc-pentapeptide (lipid intermediate I) to form undecaprenyl-pyrophosphoryl-MurNAc-(pentapeptide)GlcNAc (lipid intermediate II). In Brucella anthropi (strain ATCC 49188 / DSM 6882 / CCUG 24695 / JCM 21032 / LMG 3331 / NBRC 15819 / NCTC 12168 / Alc 37) (Ochrobactrum anthropi), this protein is UDP-N-acetylglucosamine--N-acetylmuramyl-(pentapeptide) pyrophosphoryl-undecaprenol N-acetylglucosamine transferase.